A 496-amino-acid polypeptide reads, in one-letter code: Transcription termination/antitermination protein NusA (496 aa).

The S1 motif domain maps to 135-200; the sequence is GQIITGIVKK…RGAQLFISRS (66 aa). Residues 302 to 370 enclose the KH domain; that stretch reads CHTMDIAVDI…KNLNINENII (69 aa). Tandem repeats lie at residues 364 to 414 and 440 to 490. The tract at residues 364-490 is 2 X 51 AA approximate repeats; the sequence is NINENIIKIL…LLIMTARNIC (127 aa).

The protein belongs to the NusA family. As to quaternary structure, monomer. Binds directly to the core enzyme of the DNA-dependent RNA polymerase and to nascent RNA.

It localises to the cytoplasm. Functionally, participates in both transcription termination and antitermination. This Buchnera aphidicola subsp. Acyrthosiphon pisum (strain APS) (Acyrthosiphon pisum symbiotic bacterium) protein is Transcription termination/antitermination protein NusA.